The sequence spans 199 residues: Translation initiation factor IF-3 (199 aa).

This sequence belongs to the IF-3 family. In terms of assembly, monomer.

The protein resides in the cytoplasm. IF-3 binds to the 30S ribosomal subunit and shifts the equilibrium between 70S ribosomes and their 50S and 30S subunits in favor of the free subunits, thus enhancing the availability of 30S subunits on which protein synthesis initiation begins. The chain is Translation initiation factor IF-3 from Gloeobacter violaceus (strain ATCC 29082 / PCC 7421).